We begin with the raw amino-acid sequence, 1827 residues long: Sucrase-isomaltase, intestinal (1827 aa).

The Cytoplasmic portion of the chain corresponds to 2-12 (ARKKFSGLEIS). The residue at position 7 (S7) is a Phosphoserine; by PKA. Residues 13 to 32 (LIVLFVIVTIIAIALIVVLA) traverse the membrane as a helical; Signal-anchor for type II membrane protein segment. The Lumenal segment spans residues 33 to 1827 (TKTPAVDEIS…LEEPIEINWS (1795 aa)). The disordered stretch occupies residues 40-61 (EISDSTSTPATTRVTTNPSDSG). Low complexity predominate over residues 45 to 55 (TSTPATTRVTT). The 50-residue stretch at 61–110 (GKCPNVLNDPVNVRINCIPEQFPTEGICAQRGCCWRPWNDSLIPWCFFVD) folds into the P-type 1 domain. 3 disulfides stabilise this stretch: C63-C94, C77-C93, and C88-C106. An N-linked (GlcNAc...) asparagine glycan is attached at N99. Positions 110 to 1007 (DNHGYNVQDM…DLQLNTANAR (898 aa)) are isomaltase. Sulfotyrosine occurs at positions 237 and 239. Positions 264 and 388 each coordinate substrate. A sulfotyrosine mark is found at Y391 and Y400. N437 and N455 each carry an N-linked (GlcNAc...) asparagine glycan. The Nucleophile; for isomaltase activity role is filled by D505. Cysteines 520 and 545 form a disulfide. R588 serves as a coordination point for substrate. Catalysis depends on D604, which acts as the For isomaltase activity. A disulfide bridge connects residues C635 and C646. H662 provides a ligand contact to substrate. Sulfotyrosine occurs at positions 667, 763, and 765. N-linked (GlcNAc...) asparagine glycosylation is found at N823, N855, N904, and N926. The 47-residue stretch at 932-978 (NQIFSENERFNCYPDADLATEQKCTQRGCVWRTGSSLSKAPECYFPR) folds into the P-type 2 domain. The sucrase stretch occupies residues 1008–1827 (IKLPSDPIST…LEEPIEINWS (820 aa)). 4 N-linked (GlcNAc...) asparagine glycosylation sites follow: N1235, N1303, N1340, and N1354. The Nucleophile; for sucrase activity role is filled by D1394. The active-site For sucrase activity is the E1397. An N-linked (GlcNAc...) asparagine glycan is attached at N1403. D1500 functions as the Proton donor; for isomaltase activity in the catalytic mechanism. N-linked (GlcNAc...) asparagine glycosylation is found at N1535, N1572, N1675, N1748, N1763, and N1815.

It belongs to the glycosyl hydrolase 31 family. As to quaternary structure, the resulting sucrase and isomaltase subunits stay associated with one another in a complex by non-covalent linkages. Post-translationally, the precursor is proteolytically cleaved when exposed to pancreatic proteases in the intestinal lumen. In terms of processing, sulfated. Expressed in the poorly differentiated crypt cells of the small intestine as well as in the mature villous cells. Expressed at very low levels in the colon.

Its subcellular location is the apical cell membrane. It catalyses the reaction Hydrolysis of sucrose and maltose by an alpha-D-glucosidase-type action.. The enzyme catalyses Hydrolysis of (1-&gt;6)-alpha-D-glucosidic linkages in some oligosaccharides produced from starch and glycogen by alpha-amylase, and in isomaltose.. Its function is as follows. Plays an important role in the final stage of carbohydrate digestion. Isomaltase activity is specific for both alpha-1,4- and alpha-1,6-oligosaccharides. The sequence is that of Sucrase-isomaltase, intestinal (SI) from Homo sapiens (Human).